A 219-amino-acid polypeptide reads, in one-letter code: uncharacterized protein (219 aa).

2 helical membrane-spanning segments follow: residues 81-101 and 168-188; these read VVKW…NYLI and PIME…TALV.

The protein localises to the membrane. This is an uncharacterized protein from Saccharomyces cerevisiae (strain ATCC 204508 / S288c) (Baker's yeast).